Consider the following 376-residue polypeptide: Zinc transporter 7 (376 aa).

Topologically, residues 1-37 (MLPLSIKDDEYKPPKFNLFRKISGWFRSILSDKTSRN) are cytoplasmic. A helical transmembrane segment spans residues 38-58 (LFFFLCLNLSFAFVELLYGIW). The Lumenal segment spans residues 59–67 (SNCLGLISD). Residues 68-88 (SFHMFFDSTAILAGLAASVIS) form a helical membrane-spanning segment. The Cytoplasmic segment spans residues 89–102 (KWRDNDAFSYGYVR). Residues 103 to 123 (AEVLAGFVNGLFLIFTAFFIF) traverse the membrane as a helical segment. Residues 124–140 (SEGVERALAPPDVHHER) lie on the Lumenal side of the membrane. The helical transmembrane segment at 141-161 (LLLVSILGFVVNLVGIFVFKH) threads the bilayer. The segment at 161-218 (HGGHGHSHGSGHGHSHSLFNGALDQTHGHGDHCHSHELKHGAAHSHDHAHGHGHFHSH) is his-rich loop. Topologically, residues 162–236 (GGHGHSHGSG…TGPSRQILQG (75 aa)) are cytoplasmic. Over residues 188 to 222 (GHGDHCHSHELKHGAAHSHDHAHGHGHFHSHDGPS) the composition is skewed to basic and acidic residues. The disordered stretch occupies residues 188–226 (GHGDHCHSHELKHGAAHSHDHAHGHGHFHSHDGPSLKET). Residues 237-257 (VFLHILADTLGSIGVIASAIM) traverse the membrane as a helical segment. Residues 258 to 262 (MQNFG) lie on the Lumenal side of the membrane. The chain crosses the membrane as a helical span at residues 263-283 (LMIADPICSILIAMLIVISVI). Residues 284–376 (PLLRESVGIL…LYVQIDFAAM (93 aa)) are Cytoplasmic-facing.

Belongs to the cation diffusion facilitator (CDF) transporter (TC 2.A.4) family. SLC30A subfamily. As to quaternary structure, homooligomer.

It is found in the golgi apparatus membrane. It localises to the cytoplasmic vesicle. The protein localises to the golgi apparatus. The protein resides in the trans-Golgi network. Its subcellular location is the sarcoplasmic reticulum. It is found in the mitochondrion. The catalysed reaction is Zn(2+)(in) = Zn(2+)(out). Its function is as follows. Zinc ion transporter mediating zinc entry from the cytosol into the lumen of organelles along the secretory pathway. By contributing to zinc ion homeostasis within the early secretory pathway, regulates the activation and folding of enzymes like alkaline phosphatases. This is Zinc transporter 7 (SLC30A7) from Bos taurus (Bovine).